The following is a 374-amino-acid chain: MTMTAFLARRLIGNGSSQILGTSSSSSGPFISVSRAFFSSSTPIKATLFPGDGIGPEIAESVKQVFTAADVVIDWDEQFVGTEVDPRTNSFLTWDNLQSVLKNKVGLKGPMATPIGKGHRSLNLTLRKELNLYANVRPCYSLPGYKTRYDDVDLITIRENTEGEYSGLEHQVVKGVVESLKIITRKASMRVAEYAFLYAKTHGRKKVSAIHKANIMQKTDGLFLQCCDEVAAKYPEIYYEKVVIDNCCMMLVKNPALFDVLVMPNLYGDIISDLCAGLVGGLGLTPSMNIGEDGIALAEAVHGSAPDIAGMNLANPTALLLSGVMMLRHLKLNKQAEQIHSAIINTIAEGKYRTADLGGSSTTTDFTKAICDHL.

The transit peptide at 1-44 directs the protein to the mitochondrion; the sequence is MTMTAFLARRLIGNGSSQILGTSSSSSGPFISVSRAFFSSSTPI. Residues Arg-127, Arg-137, Arg-158, and Asp-245 each contribute to the substrate site. Mg(2+)-binding residues include Asp-245, Asp-269, and Asp-273.

Belongs to the isocitrate and isopropylmalate dehydrogenases family. As to quaternary structure, heterooligomer of catalytic and regulatory subunits. It depends on Mg(2+) as a cofactor. Mn(2+) serves as cofactor. As to expression, ubiquitous. Predominantly expressed in leaves.

The protein resides in the mitochondrion. The catalysed reaction is D-threo-isocitrate + NAD(+) = 2-oxoglutarate + CO2 + NADH. Catalytic subunit of the NAD(+)-dependent isocitrate dehydrogenase involved in the oxidative decarboxylation of isocitrate to 2-oxoglutarate. Performs an essential role in the oxidative function of the citric acid cycle. In Arabidopsis thaliana (Mouse-ear cress), this protein is Isocitrate dehydrogenase [NAD] catalytic subunit 6, mitochondrial (IDH6).